The primary structure comprises 206 residues: Probable peptidyl-tRNA hydrolase (206 aa).

Catalysis depends on His-48, which acts as the Proton acceptor. Tyr-83, Asn-85, and Asn-137 together coordinate tRNA.

This sequence belongs to the PTH family.

The protein resides in the mitochondrion. It carries out the reaction an N-acyl-L-alpha-aminoacyl-tRNA + H2O = an N-acyl-L-amino acid + a tRNA + H(+). Functionally, peptidyl-tRNA hydrolase involved in the recycling of tRNA-Lys from diacetyl-lysyl-tRNA-Lys and is important for mitochondrial function. This is Probable peptidyl-tRNA hydrolase (pth1) from Schizosaccharomyces pombe (strain 972 / ATCC 24843) (Fission yeast).